Consider the following 72-residue polypeptide: Translation initiation factor IF-1 (72 aa).

Positions methionine 1–lysine 72 constitute an S1-like domain.

It belongs to the IF-1 family. As to quaternary structure, component of the 30S ribosomal translation pre-initiation complex which assembles on the 30S ribosome in the order IF-2 and IF-3, IF-1 and N-formylmethionyl-tRNA(fMet); mRNA recruitment can occur at any time during PIC assembly.

It localises to the cytoplasm. In terms of biological role, one of the essential components for the initiation of protein synthesis. Stabilizes the binding of IF-2 and IF-3 on the 30S subunit to which N-formylmethionyl-tRNA(fMet) subsequently binds. Helps modulate mRNA selection, yielding the 30S pre-initiation complex (PIC). Upon addition of the 50S ribosomal subunit IF-1, IF-2 and IF-3 are released leaving the mature 70S translation initiation complex. The chain is Translation initiation factor IF-1 from Paramagnetospirillum magneticum (strain ATCC 700264 / AMB-1) (Magnetospirillum magneticum).